A 414-amino-acid chain; its full sequence is Ribulose bisphosphate carboxylase large chain (414 aa).

Asn-100 and Thr-150 together coordinate substrate. Lys-152 serves as the catalytic Proton acceptor. Lys-154 contacts substrate. Residues Lys-178, Asp-180, and Glu-181 each coordinate Mg(2+). Lys-178 carries the post-translational modification N6-carboxylysine. The active-site Proton acceptor is His-271. Substrate is bound by residues Arg-272, His-304, and Ser-356.

This sequence belongs to the RuBisCO large chain family. Type I subfamily. In terms of assembly, heterohexadecamer of 8 large chains and 8 small chains; disulfide-linked. The disulfide link is formed within the large subunit homodimers. Mg(2+) is required as a cofactor. In terms of processing, the disulfide bond which can form in the large chain dimeric partners within the hexadecamer appears to be associated with oxidative stress and protein turnover.

It localises to the plastid. The protein resides in the chloroplast. It carries out the reaction 2 (2R)-3-phosphoglycerate + 2 H(+) = D-ribulose 1,5-bisphosphate + CO2 + H2O. It catalyses the reaction D-ribulose 1,5-bisphosphate + O2 = 2-phosphoglycolate + (2R)-3-phosphoglycerate + 2 H(+). Functionally, ruBisCO catalyzes two reactions: the carboxylation of D-ribulose 1,5-bisphosphate, the primary event in carbon dioxide fixation, as well as the oxidative fragmentation of the pentose substrate in the photorespiration process. Both reactions occur simultaneously and in competition at the same active site. The protein is Ribulose bisphosphate carboxylase large chain (rbcL) of Blechnopsis orientalis (Fish fern).